Here is a 174-residue protein sequence, read N- to C-terminus: ATP-dependent protease subunit HslV (174 aa).

Threonine 4 is a catalytic residue. 3 residues coordinate Na(+): alanine 159, cysteine 162, and threonine 165.

This sequence belongs to the peptidase T1B family. HslV subfamily. In terms of assembly, a double ring-shaped homohexamer of HslV is capped on each side by a ring-shaped HslU homohexamer. The assembly of the HslU/HslV complex is dependent on binding of ATP.

Its subcellular location is the cytoplasm. It catalyses the reaction ATP-dependent cleavage of peptide bonds with broad specificity.. Allosterically activated by HslU binding. In terms of biological role, protease subunit of a proteasome-like degradation complex believed to be a general protein degrading machinery. This chain is ATP-dependent protease subunit HslV, found in Moorella thermoacetica (strain ATCC 39073 / JCM 9320).